A 141-amino-acid chain; its full sequence is Hemoglobin subunit alpha (141 aa).

The 141-residue stretch at 1 to 141 (VLSPADKSNV…VSTVLVSKYR (141 aa)) folds into the Globin domain. At Ser-3 the chain carries Phosphoserine. N6-succinyllysine occurs at positions 7 and 11. An N6-acetyllysine; alternate modification is found at Lys-16. Position 16 is an N6-succinyllysine; alternate (Lys-16). Tyr-24 carries the phosphotyrosine modification. Ser-35 carries the post-translational modification Phosphoserine. The residue at position 40 (Lys-40) is an N6-succinyllysine. Ser-49 bears the Phosphoserine mark. O2 is bound at residue His-58. His-87 contacts heme b. Ser-102 carries the post-translational modification Phosphoserine. Thr-108 carries the phosphothreonine modification. Position 124 is a phosphoserine (Ser-124). Phosphothreonine is present on Thr-134. Ser-138 carries the post-translational modification Phosphoserine.

Belongs to the globin family. Heterotetramer of two alpha chains and two beta chains. In terms of tissue distribution, red blood cells.

Involved in oxygen transport from the lung to the various peripheral tissues. Functionally, hemopressin acts as an antagonist peptide of the cannabinoid receptor CNR1. Hemopressin-binding efficiently blocks cannabinoid receptor CNR1 and subsequent signaling. This Chalinolobus morio (Chocolate-wattled bat) protein is Hemoglobin subunit alpha (HBA).